The chain runs to 195 residues: HTH-type transcriptional regulator TtmR (195 aa).

An HTH marR-type domain is found at 47–177; it reads DSQLCFAVYA…LLDNLASMRD (131 aa). A DNA-binding region (H-T-H motif) is located at residues 93 to 116; sequence VKEIGSRLFLDSGTLTPLLKRLEA.

Its subcellular location is the cytoplasm. Functionally, formaldehyde-responsive transcription factor that modulates resistance to stress induced by formaldehyde. Impacts the expression of a number of genes encoding transcription factors and/or involved in stress response, including efgA, and which probably collectively trigger a formaldehyde-specific physiological response. Required for optimal transition to methylotrophy. Not involved in a general stress response. This Methylorubrum extorquens (strain PA1) (Methylobacterium extorquens) protein is HTH-type transcriptional regulator TtmR.